The following is a 165-amino-acid chain: Thiol peroxidase (165 aa).

Residues 18–164 (RKVGDKAPNF…YEAAIEAAKK (147 aa)) enclose the Thioredoxin domain. C60 (cysteine sulfenic acid (-SOH) intermediate) is an active-site residue. C60 and C94 form a disulfide bridge.

Belongs to the peroxiredoxin family. Tpx subfamily. In terms of assembly, homodimer.

It carries out the reaction a hydroperoxide + [thioredoxin]-dithiol = an alcohol + [thioredoxin]-disulfide + H2O. Functionally, thiol-specific peroxidase that catalyzes the reduction of hydrogen peroxide and organic hydroperoxides to water and alcohols, respectively. Plays a role in cell protection against oxidative stress by detoxifying peroxides. The protein is Thiol peroxidase of Listeria monocytogenes serotype 4b (strain F2365).